A 235-amino-acid polypeptide reads, in one-letter code: Large ribosomal subunit protein uL1c (235 aa).

It belongs to the universal ribosomal protein uL1 family. As to quaternary structure, part of the 50S ribosomal subunit.

Its subcellular location is the plastid. It localises to the chloroplast. Its function is as follows. Binds directly to 23S rRNA. Might be involved in E site tRNA release (Potential). This chain is Large ribosomal subunit protein uL1c (rpl1), found in Gracilaria tenuistipitata var. liui (Red alga).